A 1054-amino-acid polypeptide reads, in one-letter code: DIS3-like exonuclease 1 (1054 aa).

Positions 236-313 constitute a CSD1 domain; it reads AGIKSGRYIQ…WKGRTAALCE (78 aa). The interval 313–332 is disordered; sequence ENDSEDKASGESPSEPMPTG. The CSD2 domain maps to 365-431; the sequence is ILVTPWDYRI…GEIATILVEN (67 aa). In terms of domain architecture, RNB spans 465–816; the sequence is RRDLRSTHLV…VHRLLMAAIS (352 aa). Serine 989 carries the post-translational modification Phosphoserine.

The protein belongs to the RNR ribonuclease family. As to quaternary structure, component of the RNA exosome complex. The catalytically inactive RNA exosome core (Exo-9) complex is believed to associate with catalytic subunits EXOSC10, and DIS3 or DIS3L in cytoplasmic- and nuclear-specific RNA exosome complex forms. Requires Mg(2+) as cofactor.

It is found in the cytoplasm. It catalyses the reaction Exonucleolytic cleavage in the 3'- to 5'-direction to yield nucleoside 5'-phosphates.. Catalytic component of the RNA exosome complex which has 3'-&gt;5' exoribonuclease activity and participates in a multitude of cellular RNA processing and degradation events. In the cytoplasm, the RNA exosome complex is involved in general mRNA turnover and specifically degrades inherently unstable mRNAs containing AU-rich elements (AREs) within their 3' untranslated regions, and in RNA surveillance pathways, preventing translation of aberrant mRNAs. It seems to be involved in degradation of histone mRNA. This chain is DIS3-like exonuclease 1 (Dis3l), found in Rattus norvegicus (Rat).